The sequence spans 704 residues: Mannan-binding lectin serine protease 1 (704 aa).

Residues 1–24 (MRFLSFWRLLLYHALCLALPEVSA) form the signal peptide. The 119-residue stretch at 25–143 (HTVELNEMFG…TGFDAHYMAV (119 aa)) folds into the CUB 1 domain. Residues 25–189 (HTVELNEMFG…HTDNRTCRVE (165 aa)) are homodimerization. Residues 25–189 (HTVELNEMFG…HTDNRTCRVE (165 aa)) form an interaction with MBL2 region. The interval 25–283 (HTVELNEMFG…STQTHSVQIL (259 aa)) is interaction with FCN2. The interaction with MBL1 stretch occupies residues 25–305 (HTVELNEMFG…RLSYRAAGNE (281 aa)). Asn54 carries an N-linked (GlcNAc...) asparagine glycan. Residues Glu73, Asp81, Asp126, Ser128, Asp144, Val145, and Glu147 each contribute to the Ca(2+) site. A disulfide bridge links Cys78 with Cys96. An EGF-like; calcium-binding domain is found at 144 to 187 (DVDECKEREDEELSCDHYCHNYIGGYYCSCRFGYILHTDNRTCR). 4 disulfide bridges follow: Cys148-Cys162, Cys158-Cys171, Cys173-Cys186, and Cys190-Cys217. The Ca(2+) site is built by Asn164, Tyr165, and Gly168. The residue at position 164 (Asn164) is a (3R)-3-hydroxyasparagine. An N-linked (GlcNAc...) asparagine glycan is attached at Asn183. The CUB 2 domain occupies 190–302 (CSGNLFTQRT…RGWRLSYRAA (113 aa)). Ca(2+) contacts are provided by Glu240, Asp250, Asp287, and Ser289. Cysteines 247 and 265 form a disulfide. Sushi domains lie at 304 to 369 (NECP…TCKI) and 370 to 439 (VDCG…TCLP). Cystine bridges form between Cys306–Cys354, Cys334–Cys367, Cys372–Cys419, Cys402–Cys437, Cys441–Cys577, Cys480–Cys496, Cys619–Cys636, and Cys647–Cys677. Residues Asn390 and Asn412 are each glycosylated (N-linked (GlcNAc...) asparagine). Residues 454-701 (IFNGRPAQKG…NKDWIQRITG (248 aa)) enclose the Peptidase S1 domain. Residues His495 and Asp557 each act as charge relay system in the active site. Ser651 acts as the Charge relay system in catalysis.

The protein belongs to the peptidase S1 family. In terms of assembly, homodimer. Interacts with the oligomeric lectins MBL2, FCN2 and FCN3; triggers the lectin pathway of complement through activation of C3. Interacts with SERPING1. Interacts with COLEC11; probably triggers the lectin pathway of complement. Post-translationally, the iron and 2-oxoglutarate dependent 3-hydroxylation of aspartate and asparagine is (R) stereospecific within EGF domains. N-glycosylated. Some N-linked glycan are of the complex-type. In terms of processing, autoproteolytic processing of the proenzyme produces the active enzyme composed on the heavy and the light chain held together by a disulfide bond. Isoform 1 but not isoform 2 is activated through autoproteolytic processing. Protein of the plasma which is primarily expressed by liver.

Its subcellular location is the secreted. Inhibited by SERPING1 and A2M. In terms of biological role, functions in the lectin pathway of complement, which performs a key role in innate immunity by recognizing pathogens through patterns of sugar moieties and neutralizing them. The lectin pathway is triggered upon binding of mannan-binding lectin (MBL) and ficolins to sugar moieties which leads to activation of the associated proteases MASP1 and MASP2. Functions as an endopeptidase and may activate MASP2 or C2 or directly activate C3 the key component of complement reaction. Isoform 2 may have an inhibitory effect on the activation of the lectin pathway of complement or may cleave IGFBP5. Also plays a role in development. In Mus musculus (Mouse), this protein is Mannan-binding lectin serine protease 1 (Masp1).